We begin with the raw amino-acid sequence, 295 residues long: Ribosomal protein L11 methyltransferase (295 aa).

S-adenosyl-L-methionine is bound by residues T146, G167, D189, and N231.

Belongs to the methyltransferase superfamily. PrmA family.

It is found in the cytoplasm. It carries out the reaction L-lysyl-[protein] + 3 S-adenosyl-L-methionine = N(6),N(6),N(6)-trimethyl-L-lysyl-[protein] + 3 S-adenosyl-L-homocysteine + 3 H(+). Methylates ribosomal protein L11. The chain is Ribosomal protein L11 methyltransferase from Vibrio parahaemolyticus serotype O3:K6 (strain RIMD 2210633).